A 292-amino-acid chain; its full sequence is Phosphoribosylaminoimidazole-succinocarboxamide synthase (292 aa).

The protein belongs to the SAICAR synthetase family.

It catalyses the reaction 5-amino-1-(5-phospho-D-ribosyl)imidazole-4-carboxylate + L-aspartate + ATP = (2S)-2-[5-amino-1-(5-phospho-beta-D-ribosyl)imidazole-4-carboxamido]succinate + ADP + phosphate + 2 H(+). Its pathway is purine metabolism; IMP biosynthesis via de novo pathway; 5-amino-1-(5-phospho-D-ribosyl)imidazole-4-carboxamide from 5-amino-1-(5-phospho-D-ribosyl)imidazole-4-carboxylate: step 1/2. This is Phosphoribosylaminoimidazole-succinocarboxamide synthase from Thermodesulfovibrio yellowstonii (strain ATCC 51303 / DSM 11347 / YP87).